The sequence spans 992 residues: Translation initiation factor IF-2 (992 aa).

Disordered regions lie at residues 154–173 (RRLR…EREA) and 338–399 (AAPG…RPES). Residues 492 to 661 (PRAPVVTVMG…LLQAEVLELK (170 aa)) enclose the tr-type G domain. Residues 501 to 508 (GHVDHGKT) form a G1 region. Residue 501-508 (GHVDHGKT) participates in GTP binding. Positions 526–530 (GITQH) are G2. A G3 region spans residues 547–550 (DTPG). Residues 547 to 551 (DTPGH) and 601 to 604 (NKID) each bind GTP. The G4 stretch occupies residues 601–604 (NKID). The interval 637-639 (SAH) is G5.

The protein belongs to the TRAFAC class translation factor GTPase superfamily. Classic translation factor GTPase family. IF-2 subfamily.

It is found in the cytoplasm. In terms of biological role, one of the essential components for the initiation of protein synthesis. Protects formylmethionyl-tRNA from spontaneous hydrolysis and promotes its binding to the 30S ribosomal subunits. Also involved in the hydrolysis of GTP during the formation of the 70S ribosomal complex. The polypeptide is Translation initiation factor IF-2 (Polaromonas naphthalenivorans (strain CJ2)).